The sequence spans 92 residues: Small ribosomal subunit protein uS19c (92 aa).

It belongs to the universal ribosomal protein uS19 family.

It is found in the plastid. It localises to the chloroplast. Functionally, protein S19 forms a complex with S13 that binds strongly to the 16S ribosomal RNA. The polypeptide is Small ribosomal subunit protein uS19c (Chloranthus spicatus (Chulantree)).